The following is a 121-amino-acid chain: Large ribosomal subunit protein bL12 (121 aa).

It belongs to the bacterial ribosomal protein bL12 family. Homodimer. Part of the ribosomal stalk of the 50S ribosomal subunit. Forms a multimeric L10(L12)X complex, where L10 forms an elongated spine to which 2 to 4 L12 dimers bind in a sequential fashion. Binds GTP-bound translation factors.

Forms part of the ribosomal stalk which helps the ribosome interact with GTP-bound translation factors. Is thus essential for accurate translation. The protein is Large ribosomal subunit protein bL12 of Tremblaya princeps.